The following is a 750-amino-acid chain: Neprilysin (750 aa).

The span at M1–N14 shows a compositional bias: polar residues. Positions M1–K20 are disordered. Residue G2 is the site of N-myristoyl glycine attachment. The Cytoplasmic portion of the chain corresponds to G2–E28. A phosphoserine mark is found at S4 and S6. Residues P16 to R23 carry the Stop-transfer sequence motif. A helical; Signal-anchor for type II membrane protein transmembrane segment spans residues I29–T51. Topologically, residues Y52–W750 are extracellular. The 695-residue stretch at I56–W750 folds into the Peptidase M13 domain. Intrachain disulfides connect C57/C62, C80/C735, C88/C695, C143/C411, C234/C242, and C621/C747. R103 serves as a coordination point for a peptide. The N-linked (GlcNAc...) asparagine glycan is linked to N145. 2 N-linked (GlcNAc...) asparagine glycosylation sites follow: N285 and N325. H584 lines the Zn(2+) pocket. The active site involves E585. H588 contributes to the Zn(2+) binding site. Residue N628 is glycosylated (N-linked (GlcNAc...) asparagine). A Zn(2+)-binding site is contributed by E647. D651 serves as the catalytic Proton donor.

It belongs to the peptidase M13 family. Zn(2+) is required as a cofactor. Post-translationally, myristoylation is a determinant of membrane targeting. Glycosylation at Asn-628 is necessary both for surface expression and neutral endopeptidase activity.

It localises to the cell membrane. The enzyme catalyses Preferential cleavage of polypeptides between hydrophobic residues, particularly with Phe or Tyr at P1'.. It carries out the reaction substance P + H2O = substance P(1-9) + L-Leu-L-Met-NH2. It catalyses the reaction substance P + H2O = substance P(1-7) + L-Phe-Gly-L-Leu-L-Met-NH2. The catalysed reaction is neurotensin + H2O = neurotensin(1-11) + L-isoleucyl-L-leucine. The enzyme catalyses neurotensin + H2O = neurotensin(1-10) + L-tyrosyl-L-isoleucyl-L-leucine. Its activity is regulated as follows. Inhibited in a dose dependent manner by opiorphin. Activated by K49-P1-20, a twenty-residue synthetic peptide shortened from the snake B.asper myotoxin II. In terms of biological role, thermolysin-like specificity, but is almost confined on acting on polypeptides of up to 30 amino acids. Biologically important in the destruction of opioid peptides such as Met- and Leu-enkephalins by cleavage of a Gly-Phe bond. Catalyzes cleavage of bradykinin, substance P and neurotensin peptides. Able to cleave angiotensin-1, angiotensin-2 and angiotensin 1-9. Involved in the degradation of atrial natriuretic factor (ANF) and brain natriuretic factor (BNP(1-32)). Displays UV-inducible elastase activity toward skin preelastic and elastic fibers. This chain is Neprilysin, found in Homo sapiens (Human).